Here is a 331-residue protein sequence, read N- to C-terminus: Elongation factor Ts, mitochondrial (331 aa).

Residues 1-14 (MIVSRQVIRSVVRK) constitute a mitochondrion transit peptide.

Belongs to the EF-Ts family.

The protein resides in the mitochondrion. Functionally, associates with the EF-Tu.GDP complex and induces the exchange of GDP to GTP. It remains bound to the aminoacyl-tRNA.EF-Tu.GTP complex up to the GTP hydrolysis stage on the ribosome. The polypeptide is Elongation factor Ts, mitochondrial (Brugia malayi (Filarial nematode worm)).